A 238-amino-acid chain; its full sequence is Segregation and condensation protein A (238 aa).

It belongs to the ScpA family. Component of a cohesin-like complex composed of ScpA, ScpB and the Smc homodimer, in which ScpA and ScpB bind to the head domain of Smc. The presence of the three proteins is required for the association of the complex with DNA.

Its subcellular location is the cytoplasm. Its function is as follows. Participates in chromosomal partition during cell division. May act via the formation of a condensin-like complex containing Smc and ScpB that pull DNA away from mid-cell into both cell halves. This is Segregation and condensation protein A from Macrococcus caseolyticus (strain JCSC5402) (Macrococcoides caseolyticum).